Consider the following 296-residue polypeptide: Ribosomal RNA small subunit methyltransferase A (296 aa).

N30, L32, G57, E78, D103, and N128 together coordinate S-adenosyl-L-methionine.

It belongs to the class I-like SAM-binding methyltransferase superfamily. rRNA adenine N(6)-methyltransferase family. RsmA subfamily.

Its subcellular location is the cytoplasm. The catalysed reaction is adenosine(1518)/adenosine(1519) in 16S rRNA + 4 S-adenosyl-L-methionine = N(6)-dimethyladenosine(1518)/N(6)-dimethyladenosine(1519) in 16S rRNA + 4 S-adenosyl-L-homocysteine + 4 H(+). In terms of biological role, specifically dimethylates two adjacent adenosines (A1518 and A1519) in the loop of a conserved hairpin near the 3'-end of 16S rRNA in the 30S particle. May play a critical role in biogenesis of 30S subunits. The protein is Ribosomal RNA small subunit methyltransferase A of Staphylococcus epidermidis (strain ATCC 35984 / DSM 28319 / BCRC 17069 / CCUG 31568 / BM 3577 / RP62A).